The sequence spans 88 residues: uncharacterized protein (88 aa).

A helical membrane pass occupies residues Ile-34 to Ile-54.

It is found in the membrane. This is an uncharacterized protein from Ureaplasma parvum serovar 3 (strain ATCC 700970).